A 469-amino-acid chain; its full sequence is tRNA modification GTPase MnmE (469 aa).

(6S)-5-formyl-5,6,7,8-tetrahydrofolate-binding residues include arginine 26, glutamate 88, and arginine 127. The 169-residue stretch at 222–390 folds into the TrmE-type G domain; the sequence is GLKVAIVGRP…LEDAILHLVQ (169 aa). Asparagine 232 contacts K(+). GTP-binding positions include 232 to 237, 251 to 257, 276 to 279, and 344 to 347; these read NVGKSS, TDLPGTT, DTAG, and NKAD. Serine 236 contributes to the Mg(2+) binding site. Residues threonine 251, leucine 253, and threonine 256 each coordinate K(+). Residue threonine 257 participates in Mg(2+) binding. Lysine 469 is a binding site for (6S)-5-formyl-5,6,7,8-tetrahydrofolate.

It belongs to the TRAFAC class TrmE-Era-EngA-EngB-Septin-like GTPase superfamily. TrmE GTPase family. As to quaternary structure, homodimer. Heterotetramer of two MnmE and two MnmG subunits. K(+) is required as a cofactor.

The protein localises to the cytoplasm. Functionally, exhibits a very high intrinsic GTPase hydrolysis rate. Involved in the addition of a carboxymethylaminomethyl (cmnm) group at the wobble position (U34) of certain tRNAs, forming tRNA-cmnm(5)s(2)U34. The polypeptide is tRNA modification GTPase MnmE (Synechococcus elongatus).